We begin with the raw amino-acid sequence, 242 residues long: tRNA (guanine-N(1)-)-methyltransferase (242 aa).

S-adenosyl-L-methionine contacts are provided by residues glycine 114 and isoleucine 134 to leucine 139. Basic and acidic residues predominate over residues arginine 223–asparagine 233. The disordered stretch occupies residues arginine 223–serine 242.

It belongs to the RNA methyltransferase TrmD family. As to quaternary structure, homodimer.

The protein resides in the cytoplasm. It carries out the reaction guanosine(37) in tRNA + S-adenosyl-L-methionine = N(1)-methylguanosine(37) in tRNA + S-adenosyl-L-homocysteine + H(+). Its function is as follows. Specifically methylates guanosine-37 in various tRNAs. This Rhodopirellula baltica (strain DSM 10527 / NCIMB 13988 / SH1) protein is tRNA (guanine-N(1)-)-methyltransferase.